Reading from the N-terminus, the 660-residue chain is Acetyl-coenzyme A synthetase (660 aa).

Residues 197-200 (RGGK) and T317 contribute to the CoA site. ATP-binding positions include 397-399 (GEP), 421-426 (DTFWQT), D512, and R528. Residue S536 participates in CoA binding. Residue R539 coordinates ATP. V550 and V555 together coordinate Mg(2+). An N6-acetyllysine modification is found at K625.

This sequence belongs to the ATP-dependent AMP-binding enzyme family. Mg(2+) is required as a cofactor. In terms of processing, acetylated. Deacetylation by the SIR2-homolog deacetylase activates the enzyme.

It catalyses the reaction acetate + ATP + CoA = acetyl-CoA + AMP + diphosphate. In terms of biological role, catalyzes the conversion of acetate into acetyl-CoA (AcCoA), an essential intermediate at the junction of anabolic and catabolic pathways. AcsA undergoes a two-step reaction. In the first half reaction, AcsA combines acetate with ATP to form acetyl-adenylate (AcAMP) intermediate. In the second half reaction, it can then transfer the acetyl group from AcAMP to the sulfhydryl group of CoA, forming the product AcCoA. The chain is Acetyl-coenzyme A synthetase from Ralstonia pickettii (strain 12J).